The primary structure comprises 516 residues: MNALSEHILSELRRLLSEMSDGGSVGPSVYDTAQALRFHGNVTGRQDAYAWLIAQQQADGGWGSADFPLFRHAPTWAALLALQRADPLPGAADAVQTATRFLQRQPDPYAHAVPEDAPIGAELILPQFCGEAASLLGGVAFPRHPALLPLRQACLVKLGAVAMLPSGHPLLHSWEAWGTSPTTACPDDDGSIGISPAATAAWRAQAVTRGSTPQVGRADAYLQMASRATRSGIEGVFPNVWPINVFEPCWSLYTLHLAGLFAHPALAEAVRVIVAQLDARLGVHGLGPALHFAADADDTAVALCVLHLAGRDPAVDALRHFEIGELFVTFPGERNASVSTNIHALHALRLLGKPAAGASAYVEANRNPHGLWDNEKWHVSWLYPTAHAVAALAQGKPQWRDERALAALLQAQRDDGGWGAGRGSTFEETAYALFALHVMDGSEEATGRRRIAQVVARALEWMLARHAAHGLPQTPLWIGKELYCPTRVVRVAELAGLWLALRWGRRVLAEGAGAAP.

PFTB repeat units lie at residues Arg45 to Asp86 and Asp401 to Glu443.

This is an uncharacterized protein from Bradyrhizobium diazoefficiens (strain JCM 10833 / BCRC 13528 / IAM 13628 / NBRC 14792 / USDA 110).